The primary structure comprises 239 residues: 2-C-methyl-D-erythritol 4-phosphate cytidylyltransferase (239 aa).

It belongs to the IspD/TarI cytidylyltransferase family. IspD subfamily. Homodimer.

The catalysed reaction is 2-C-methyl-D-erythritol 4-phosphate + CTP + H(+) = 4-CDP-2-C-methyl-D-erythritol + diphosphate. It participates in isoprenoid biosynthesis; isopentenyl diphosphate biosynthesis via DXP pathway; isopentenyl diphosphate from 1-deoxy-D-xylulose 5-phosphate: step 2/6. Catalyzes the formation of 4-diphosphocytidyl-2-C-methyl-D-erythritol from CTP and 2-C-methyl-D-erythritol 4-phosphate (MEP). The chain is 2-C-methyl-D-erythritol 4-phosphate cytidylyltransferase from Sodalis glossinidius (strain morsitans).